The sequence spans 199 residues: Large ribosomal subunit protein uL4 (199 aa).

It belongs to the universal ribosomal protein uL4 family. As to quaternary structure, part of the 50S ribosomal subunit.

In terms of biological role, one of the primary rRNA binding proteins, this protein initially binds near the 5'-end of the 23S rRNA. It is important during the early stages of 50S assembly. It makes multiple contacts with different domains of the 23S rRNA in the assembled 50S subunit and ribosome. Its function is as follows. Forms part of the polypeptide exit tunnel. In Aquifex pyrophilus, this protein is Large ribosomal subunit protein uL4.